A 34-amino-acid chain; its full sequence is MELLTFGWAALLAVFTFSLAMVVWGRNGDGSIGF.

Residues 3–23 (LLTFGWAALLAVFTFSLAMVV) traverse the membrane as a helical segment.

It belongs to the PetN family. In terms of assembly, the 4 large subunits of the cytochrome b6-f complex are cytochrome b6, subunit IV (17 kDa polypeptide, PetD), cytochrome f and the Rieske protein, while the 4 small subunits are PetG, PetL, PetM and PetN. The complex functions as a dimer.

The protein resides in the cellular thylakoid membrane. In terms of biological role, component of the cytochrome b6-f complex, which mediates electron transfer between photosystem II (PSII) and photosystem I (PSI), cyclic electron flow around PSI, and state transitions. The protein is Cytochrome b6-f complex subunit 8 of Synechococcus elongatus (strain ATCC 33912 / PCC 7942 / FACHB-805) (Anacystis nidulans R2).